Reading from the N-terminus, the 442-residue chain is Hydroxycinnamoyltransferase 2 (442 aa).

Active-site proton acceptor residues include His159 and Asp389.

This sequence belongs to the plant acyltransferase family. As to expression, expressed in roots and leaves. Expressed at low levels in stems and seeds.

Its function is as follows. Hydroxycinnamoyl transferase that catalyzes the transfer of an acyl from p-coumaryol-CoA to various acyl acceptors. Can use feruloyl-CoA and caffeoyl-CoA as acyl donors. The chain is Hydroxycinnamoyltransferase 2 from Oryza sativa subsp. japonica (Rice).